Here is a 475-residue protein sequence, read N- to C-terminus: Dihydrolipoyl dehydrogenase (475 aa).

Residues 39–47, Lys56, and Ala118 each bind FAD; that span reads EKDAYGGTC. Cys47 and Cys52 are joined by a disulfide. NAD(+)-binding positions include 186-190, Glu209, and 275-278; these read GGGYI and AVGR. Residues Asp318 and Ala327 each coordinate FAD. His451 functions as the Proton acceptor in the catalytic mechanism.

It belongs to the class-I pyridine nucleotide-disulfide oxidoreductase family. In terms of assembly, homodimer. Requires FAD as cofactor.

It localises to the cytoplasm. It catalyses the reaction N(6)-[(R)-dihydrolipoyl]-L-lysyl-[protein] + NAD(+) = N(6)-[(R)-lipoyl]-L-lysyl-[protein] + NADH + H(+). This Haloferax volcanii (strain ATCC 29605 / DSM 3757 / JCM 8879 / NBRC 14742 / NCIMB 2012 / VKM B-1768 / DS2) (Halobacterium volcanii) protein is Dihydrolipoyl dehydrogenase (lpdA).